We begin with the raw amino-acid sequence, 460 residues long: tRNA modification GTPase MnmE (460 aa).

(6S)-5-formyl-5,6,7,8-tetrahydrofolate-binding residues include Arg-23, Glu-86, and Arg-126. One can recognise a TrmE-type G domain in the interval 222-381; sequence GLSTAIIGRP…LEAAIASLFF (160 aa). Position 232 (Asn-232) interacts with K(+). GTP-binding positions include 232–237, 251–257, and 276–279; these read NVGKSS, TDIAGTT, and DTAG. Ser-236 lines the Mg(2+) pocket. K(+) is bound by residues Thr-251, Ile-253, and Thr-256. Thr-257 is a Mg(2+) binding site. Lys-460 contributes to the (6S)-5-formyl-5,6,7,8-tetrahydrofolate binding site.

Belongs to the TRAFAC class TrmE-Era-EngA-EngB-Septin-like GTPase superfamily. TrmE GTPase family. As to quaternary structure, homodimer. Heterotetramer of two MnmE and two MnmG subunits. K(+) serves as cofactor.

The protein resides in the cytoplasm. In terms of biological role, exhibits a very high intrinsic GTPase hydrolysis rate. Involved in the addition of a carboxymethylaminomethyl (cmnm) group at the wobble position (U34) of certain tRNAs, forming tRNA-cmnm(5)s(2)U34. This chain is tRNA modification GTPase MnmE, found in Exiguobacterium sibiricum (strain DSM 17290 / CCUG 55495 / CIP 109462 / JCM 13490 / 255-15).